Consider the following 118-residue polypeptide: Large ribosomal subunit protein bL20 (118 aa).

This sequence belongs to the bacterial ribosomal protein bL20 family.

Its function is as follows. Binds directly to 23S ribosomal RNA and is necessary for the in vitro assembly process of the 50S ribosomal subunit. It is not involved in the protein synthesizing functions of that subunit. The chain is Large ribosomal subunit protein bL20 from Aeromonas hydrophila subsp. hydrophila (strain ATCC 7966 / DSM 30187 / BCRC 13018 / CCUG 14551 / JCM 1027 / KCTC 2358 / NCIMB 9240 / NCTC 8049).